A 555-amino-acid polypeptide reads, in one-letter code: 2-succinyl-5-enolpyruvyl-6-hydroxy-3-cyclohexene-1-carboxylate synthase (555 aa).

This sequence belongs to the TPP enzyme family. MenD subfamily. In terms of assembly, homodimer. Mg(2+) serves as cofactor. The cofactor is Mn(2+). Thiamine diphosphate is required as a cofactor.

It carries out the reaction isochorismate + 2-oxoglutarate + H(+) = 5-enolpyruvoyl-6-hydroxy-2-succinyl-cyclohex-3-ene-1-carboxylate + CO2. The protein operates within quinol/quinone metabolism; 1,4-dihydroxy-2-naphthoate biosynthesis; 1,4-dihydroxy-2-naphthoate from chorismate: step 2/7. It functions in the pathway quinol/quinone metabolism; menaquinone biosynthesis. Catalyzes the thiamine diphosphate-dependent decarboxylation of 2-oxoglutarate and the subsequent addition of the resulting succinic semialdehyde-thiamine pyrophosphate anion to isochorismate to yield 2-succinyl-5-enolpyruvyl-6-hydroxy-3-cyclohexene-1-carboxylate (SEPHCHC). The sequence is that of 2-succinyl-5-enolpyruvyl-6-hydroxy-3-cyclohexene-1-carboxylate synthase from Bacteroides thetaiotaomicron (strain ATCC 29148 / DSM 2079 / JCM 5827 / CCUG 10774 / NCTC 10582 / VPI-5482 / E50).